Here is a 309-residue protein sequence, read N- to C-terminus: Haloalkane dehalogenase (309 aa).

The AB hydrolase-1 domain maps to 37 to 148 (PTVLFLHGNP…FERWEDFHQR (112 aa)). Catalysis depends on aspartate 110, which acts as the Nucleophile. The active-site Proton donor is the glutamate 134. The active-site Proton acceptor is the histidine 278.

This sequence belongs to the haloalkane dehalogenase family. Type 2 subfamily. In terms of assembly, monomer.

It catalyses the reaction 1-haloalkane + H2O = a halide anion + a primary alcohol + H(+). Functionally, catalyzes hydrolytic cleavage of carbon-halogen bonds in halogenated aliphatic compounds, leading to the formation of the corresponding primary alcohols, halide ions and protons. The polypeptide is Haloalkane dehalogenase (Mesorhizobium japonicum (strain LMG 29417 / CECT 9101 / MAFF 303099) (Mesorhizobium loti (strain MAFF 303099))).